The following is a 106-amino-acid chain: Iron-sulfur cluster assembly protein CyaY (106 aa).

The protein belongs to the frataxin family.

In terms of biological role, involved in iron-sulfur (Fe-S) cluster assembly. May act as a regulator of Fe-S biogenesis. The protein is Iron-sulfur cluster assembly protein CyaY of Klebsiella pneumoniae subsp. pneumoniae (strain ATCC 700721 / MGH 78578).